The chain runs to 63 residues: Large ribosomal subunit protein uL29 (63 aa).

It belongs to the universal ribosomal protein uL29 family.

This chain is Large ribosomal subunit protein uL29, found in Shewanella baltica (strain OS223).